Consider the following 346-residue polypeptide: Holliday junction branch migration complex subunit RuvB (346 aa).

Residues 4–185 (SDRIITASPF…FGIVSRLEFY (182 aa)) are large ATPase domain (RuvB-L). ATP-binding positions include Leu24, Arg25, Gly66, Lys69, Thr70, Thr71, 132–134 (EDY), Arg175, Tyr185, and Arg222. Thr70 contacts Mg(2+). Residues 186–256 (TSDELSKIVT…VADAALQMLD (71 aa)) are small ATPAse domain (RuvB-S). Residues 259-346 (AAGLDVLDRK…AATPGLFNPD (88 aa)) are head domain (RuvB-H). The DNA site is built by Arg295, Arg314, and Arg319.

This sequence belongs to the RuvB family. As to quaternary structure, homohexamer. Forms an RuvA(8)-RuvB(12)-Holliday junction (HJ) complex. HJ DNA is sandwiched between 2 RuvA tetramers; dsDNA enters through RuvA and exits via RuvB. An RuvB hexamer assembles on each DNA strand where it exits the tetramer. Each RuvB hexamer is contacted by two RuvA subunits (via domain III) on 2 adjacent RuvB subunits; this complex drives branch migration. In the full resolvosome a probable DNA-RuvA(4)-RuvB(12)-RuvC(2) complex forms which resolves the HJ.

It localises to the cytoplasm. The enzyme catalyses ATP + H2O = ADP + phosphate + H(+). Its function is as follows. The RuvA-RuvB-RuvC complex processes Holliday junction (HJ) DNA during genetic recombination and DNA repair, while the RuvA-RuvB complex plays an important role in the rescue of blocked DNA replication forks via replication fork reversal (RFR). RuvA specifically binds to HJ cruciform DNA, conferring on it an open structure. The RuvB hexamer acts as an ATP-dependent pump, pulling dsDNA into and through the RuvAB complex. RuvB forms 2 homohexamers on either side of HJ DNA bound by 1 or 2 RuvA tetramers; 4 subunits per hexamer contact DNA at a time. Coordinated motions by a converter formed by DNA-disengaged RuvB subunits stimulates ATP hydrolysis and nucleotide exchange. Immobilization of the converter enables RuvB to convert the ATP-contained energy into a lever motion, pulling 2 nucleotides of DNA out of the RuvA tetramer per ATP hydrolyzed, thus driving DNA branch migration. The RuvB motors rotate together with the DNA substrate, which together with the progressing nucleotide cycle form the mechanistic basis for DNA recombination by continuous HJ branch migration. Branch migration allows RuvC to scan DNA until it finds its consensus sequence, where it cleaves and resolves cruciform DNA. The sequence is that of Holliday junction branch migration complex subunit RuvB from Nitrosomonas eutropha (strain DSM 101675 / C91 / Nm57).